We begin with the raw amino-acid sequence, 129 residues long: Small ribosomal subunit protein uS8 (129 aa).

This sequence belongs to the universal ribosomal protein uS8 family. Part of the 30S ribosomal subunit. Contacts proteins S5 and S12.

Functionally, one of the primary rRNA binding proteins, it binds directly to 16S rRNA central domain where it helps coordinate assembly of the platform of the 30S subunit. The sequence is that of Small ribosomal subunit protein uS8 from Spiroplasma kunkelii.